The following is a 535-amino-acid chain: Beta-amylase (535 aa).

A propeptide spans 1 to 2 (removed in mature form); the sequence is ME. Position 3 is an N-acetylvaline (valine 3). Aspartate 51, histidine 91, and aspartate 99 together coordinate substrate. Glutamate 184 acts as the Proton donor in catalysis. The substrate site is built by lysine 293, histidine 298, and threonine 340. Glutamate 378 acts as the Proton acceptor in catalysis. Residues 379-380 and arginine 418 each bind substrate; that span reads NA. Tandem repeats lie at residues 489–499, 500–510, and 511–521. Residues 489-532 form a 4 X 11 AA tandem repeats region; that stretch reads GPTGGMGGQAEGPTCGMGGQVKGPTGGMGGQAEDPTSGMGGELP. A propeptide spans 490–535 (removed in mature form); the sequence is PTGGMGGQAEGPTCGMGGQVKGPTGGMGGQAEDPTSGMGGELPATM. A disordered region spans residues 513–535; it reads TGGMGGQAEDPTSGMGGELPATM. The stretch at 522–532 is one 4; approximate repeat; sequence DPTSGMGGELP.

It belongs to the glycosyl hydrolase 14 family. In terms of assembly, monomer. In terms of tissue distribution, endosperm.

It catalyses the reaction Hydrolysis of (1-&gt;4)-alpha-D-glucosidic linkages in polysaccharides so as to remove successive maltose units from the non-reducing ends of the chains.. In terms of biological role, catalyzes the liberation of maltose from 1,4-alpha-D glucans. The polypeptide is Beta-amylase (Hordeum vulgare subsp. spontaneum (Wild barley)).